We begin with the raw amino-acid sequence, 62 residues long: UPF0291 protein CLB_2550 (62 aa).

The protein belongs to the UPF0291 family.

It is found in the cytoplasm. The polypeptide is UPF0291 protein CLB_2550 (Clostridium botulinum (strain ATCC 19397 / Type A)).